The primary structure comprises 633 residues: Chaperone protein DnaK (633 aa).

T196 carries the phosphothreonine; by autocatalysis modification. Positions N594 to K633 are disordered. The segment covering H610 to G619 has biased composition (gly residues).

This sequence belongs to the heat shock protein 70 family.

In terms of biological role, acts as a chaperone. The sequence is that of Chaperone protein DnaK from Chlorobaculum tepidum (strain ATCC 49652 / DSM 12025 / NBRC 103806 / TLS) (Chlorobium tepidum).